Consider the following 204-residue polypeptide: Urease accessory protein UreG (204 aa).

11 to 18 (GPVGAGKT) is a GTP binding site.

It belongs to the SIMIBI class G3E GTPase family. UreG subfamily. As to quaternary structure, homodimer. UreD, UreF and UreG form a complex that acts as a GTP-hydrolysis-dependent molecular chaperone, activating the urease apoprotein by helping to assemble the nickel containing metallocenter of UreC. The UreE protein probably delivers the nickel.

Its subcellular location is the cytoplasm. Its function is as follows. Facilitates the functional incorporation of the urease nickel metallocenter. This process requires GTP hydrolysis, probably effectuated by UreG. In Staphylococcus aureus (strain Mu3 / ATCC 700698), this protein is Urease accessory protein UreG.